A 110-amino-acid polypeptide reads, in one-letter code: Nucleoid-associated protein Mkms_4993 (110 aa).

The protein belongs to the YbaB/EbfC family. In terms of assembly, homodimer.

The protein resides in the cytoplasm. Its subcellular location is the nucleoid. Its function is as follows. Binds to DNA and alters its conformation. May be involved in regulation of gene expression, nucleoid organization and DNA protection. This Mycobacterium sp. (strain KMS) protein is Nucleoid-associated protein Mkms_4993.